We begin with the raw amino-acid sequence, 644 residues long: Major core protein OPG129 (644 aa).

A propeptide spanning residues 1-61 (MEAVVNSDVF…IVDDDFISAG (61 aa)) is cleaved from the precursor. Residues 61-80 (GARNQRTKPKRAGNDQAQQT) are disordered.

Belongs to the orthopoxvirus OPG129 family. In terms of processing, the 73-kDa precursor is cleaved to a mature protein of 60 kDa during virion maturation. Proteolytic cleavage of major core proteins OPG129, OPG136, and OPG098, which occurs at a late stage of core formation, is required for production of infectious mature virions (MV).

Its subcellular location is the virion. Functionally, major component of the virion core that undergoes proteolytic processing during the immature virion (IV) to mature virion (MV) transition. Essential for the formation of a structurally normal core. This Variola virus (isolate Human/India/Ind3/1967) (VARV) protein is Major core protein OPG129 (OPG129).